Consider the following 747-residue polypeptide: Elongation factor G, mitochondrial (747 aa).

The transit peptide at 1–16 (MSLIMRVLNGNLSLRL) directs the protein to the mitochondrion. The tr-type G domain occupies 42–319 (ERIRNIGISA…AIIDYLPNPG (278 aa)). GTP-binding positions include 51 to 58 (AHIDSGKT), 118 to 122 (DTPGH), and 172 to 175 (NKLD).

It belongs to the TRAFAC class translation factor GTPase superfamily. Classic translation factor GTPase family. EF-G/EF-2 subfamily.

The protein localises to the mitochondrion. It functions in the pathway protein biosynthesis; polypeptide chain elongation. Mitochondrial GTPase that catalyzes the GTP-dependent ribosomal translocation step during translation elongation. During this step, the ribosome changes from the pre-translocational (PRE) to the post-translocational (POST) state as the newly formed A-site-bound peptidyl-tRNA and P-site-bound deacylated tRNA move to the P and E sites, respectively. Catalyzes the coordinated movement of the two tRNA molecules, the mRNA and conformational changes in the ribosome. Essential during development as it acts as a retrograde signal from mitochondria to the nucleus to slow down cell proliferation if mitochondrial energy output is low. This Drosophila grimshawi (Hawaiian fruit fly) protein is Elongation factor G, mitochondrial.